We begin with the raw amino-acid sequence, 156 residues long: Small ribosomal subunit protein uS7 (156 aa).

Belongs to the universal ribosomal protein uS7 family. In terms of assembly, part of the 30S ribosomal subunit. Contacts proteins S9 and S11.

One of the primary rRNA binding proteins, it binds directly to 16S rRNA where it nucleates assembly of the head domain of the 30S subunit. Is located at the subunit interface close to the decoding center, probably blocks exit of the E-site tRNA. The protein is Small ribosomal subunit protein uS7 of Citrobacter koseri (strain ATCC BAA-895 / CDC 4225-83 / SGSC4696).